Consider the following 413-residue polypeptide: Terephthalate 1,2-dioxygenase, terminal oxygenase component subunit alpha 2 (413 aa).

A Rieske domain is found at 41-144; that stretch reads NYLCLESEIP…CKEEHGPRKL (104 aa). C82, H84, C102, and H105 together coordinate [2Fe-2S] cluster.

This sequence belongs to the bacterial ring-hydroxylating dioxygenase alpha subunit family. In terms of assembly, heterotetramer composed of 2 alpha (TphA2I and TphA2II) and 2 beta (TphA3I and TphA3II) subunits. Part of a multicomponent enzyme system composed of a reductase (TphA1I or TphA1II) and a two-subunit oxygenase component (TphA2I or TphA2II and TphA3I or TphA3II). It depends on Fe cation as a cofactor. [2Fe-2S] cluster is required as a cofactor.

It catalyses the reaction terephthalate + NADH + O2 + H(+) = (3S,4R)-3,4-dihydroxycyclohexa-1,5-diene-1,4-dicarboxylate + NAD(+). With respect to regulation, inhibited by EDTA. Functionally, component of the terephthalate 1,2-dioxygenase multicomponent enzyme system which catalyzes the dioxygenation of terephthalate (TER/TPA) to 1,2-dihydroxy-3,5-cyclohexadiene-1,4-dicarboxylic acid (DCD). It can also use 2,5-dicarboxypyridine (PDC) and 1,4-napthalenedicarboxylic acid (NDC) as substrates, and preferentially uses NADPH which is the physiological electron donor. The polypeptide is Terephthalate 1,2-dioxygenase, terminal oxygenase component subunit alpha 2 (tphA2II) (Comamonas sp).